The following is a 335-amino-acid chain: Probable tRNA N6-adenosine threonylcarbamoyltransferase (335 aa).

Residues histidine 109, histidine 113, and tyrosine 130 each coordinate a divalent metal cation. Substrate-binding positions include 130–134 (YVSGG), aspartate 162, glycine 177, glutamate 181, and asparagine 266. An a divalent metal cation-binding site is contributed by aspartate 294.

The protein belongs to the KAE1 / TsaD family. In terms of assembly, component of the EKC/KEOPS complex; the whole complex dimerizes. Requires a divalent metal cation as cofactor.

The protein resides in the cytoplasm. It is found in the nucleus. It carries out the reaction L-threonylcarbamoyladenylate + adenosine(37) in tRNA = N(6)-L-threonylcarbamoyladenosine(37) in tRNA + AMP + H(+). In terms of biological role, component of the EKC/KEOPS complex that is required for the formation of a threonylcarbamoyl group on adenosine at position 37 (t(6)A37) in tRNAs that read codons beginning with adenine. The complex is probably involved in the transfer of the threonylcarbamoyl moiety of threonylcarbamoyl-AMP (TC-AMP) to the N6 group of A37. Osgep likely plays a direct catalytic role in this reaction, but requires other protein(s) of the complex to fulfill this activity. This Nematostella vectensis (Starlet sea anemone) protein is Probable tRNA N6-adenosine threonylcarbamoyltransferase.